The chain runs to 1027 residues: LLGL scribble cell polarity complex component 2 (1027 aa).

WD repeat units follow at residues 36–69, 76–117, 132–169, 193–227, 233–268, 282–324, 332–366, 388–464, 508–583, and 592–653; these read SALG…FMGL, VLQI…EESF, VTEI…DRTI, ALQE…LSHF, LENA…NPEP, AITK…GQQT, VIDF…VIDL, TCSH…YKLS, QKIF…FVLV, and TSLA…LRQS. S653 carries the phosphoserine modification. The span at 654 to 669 shows a compositional bias: basic residues; the sequence is FRRMRRSRVSSHKRRP. Residues 654-678 are disordered; sequence FRRMRRSRVSSHKRRPGGPTGEAQA. 4 WD repeats span residues 715–771, 780–832, 837–890, and 904–927; these read VRTL…KEIQ, GILV…VSAK, LTAL…VRYS, and VFTK…SLST. The disordered stretch occupies residues 940–981; it reads TKAKKHNRPSNGNGTGLKMTSSGHVRNSKSQSDGDEKKPGPV. Over residues 957-970 the composition is skewed to polar residues; the sequence is KMTSSGHVRNSKSQ. Residues S971 and S1022 each carry the phosphoserine modification.

It belongs to the WD repeat L(2)GL family. As to quaternary structure, interacts with GPSM2/LGN, PRKCI/aPKC and PARD6B/Par-6. The complex is enhanced during mitosis. Interacts with DCAF1. In terms of processing, phosphorylated at Ser-653 by PRKCI. Phosphorylation is enhanced during cell polarization induced by calcium. Phosphorylation may occur during the cell-cell contact-induced cell polarization and may contribute to the segregation of LLGL2 from the PRKCI/aPKC and PARD6B/Par-6 complex.

The protein localises to the cytoplasm. Its function is as follows. Part of a complex with GPSM2/LGN, PRKCI/aPKC and PARD6B/Par-6, which may ensure the correct organization and orientation of bipolar spindles for normal cell division. This complex plays roles in the initial phase of the establishment of epithelial cell polarity. The sequence is that of LLGL scribble cell polarity complex component 2 (Llgl2) from Mus musculus (Mouse).